The primary structure comprises 331 residues: Protein-methionine-sulfoxide reductase catalytic subunit MsrP (331 aa).

A signal peptide (tat-type signal) is located at residues 1-57 (MLIKKTLRAALAGDDIPRSEITPRAVFEHRRRILQAAGAAAAGGLVGAHGLALAAYA). Residues N90, 93–94 (YE), C148, T183, N231, R236, and 247–249 (SAK) contribute to the Mo-molybdopterin site.

This sequence belongs to the MsrP family. In terms of assembly, heterodimer of a catalytic subunit (MsrP) and a heme-binding subunit (MsrQ). The cofactor is Mo-molybdopterin. Predicted to be exported by the Tat system. The position of the signal peptide cleavage has not been experimentally proven.

The protein resides in the periplasm. It carries out the reaction L-methionyl-[protein] + a quinone + H2O = L-methionyl-(S)-S-oxide-[protein] + a quinol. It catalyses the reaction L-methionyl-[protein] + a quinone + H2O = L-methionyl-(R)-S-oxide-[protein] + a quinol. In terms of biological role, part of the MsrPQ system that repairs oxidized periplasmic proteins containing methionine sulfoxide residues (Met-O), using respiratory chain electrons. Thus protects these proteins from oxidative-stress damage caused by reactive species of oxygen and chlorine generated by the host defense mechanisms. MsrPQ is essential for the maintenance of envelope integrity under bleach stress, rescuing a wide series of structurally unrelated periplasmic proteins from methionine oxidation. The catalytic subunit MsrP is non-stereospecific, being able to reduce both (R-) and (S-) diastereoisomers of methionine sulfoxide. The sequence is that of Protein-methionine-sulfoxide reductase catalytic subunit MsrP from Burkholderia mallei (strain ATCC 23344).